We begin with the raw amino-acid sequence, 453 residues long: MFSKLAANFAQRAAGSAAGTTRRVAFQTRFVSSQTLANGSKGRAIPFQKPGSVPATFTIRDGPVFRGKAFGANANISGEAVFTTSLVGYPESMTDPSYRGQILVFTQPLIGNYGVPSNERDEYNLLKYFESPHIQCAGVVVSDVALNYSHWTAVESLSEWCAREASPPSPASDTRAIVTHLREQGSSLARISIGDEYDADEDESFVDPGQINLVKRVSTKAPFVIESPGADLHVALIDCGVKENILRQLVSRGASLTVFPYNYPIHKVADHFDGVFISNGPGDPIHCQETVYNLARLMETSSIPIMGICLGHQLLAMAVGAKTIKMKYGNRAHNIPALDLTTGQCHITSQNHGYAVDASTLPNDFKEYFVNLNDGSNEGMMHRTRPIFSTQFHPEAKGGPMDSSYLFEKYLENVRAAKSAQRVYKDNRPSQYVLDVLSKERVGVEPVPLVGFA.

The N-terminal 13 residues, 1–13 (MFSKLAANFAQRA), are a transit peptide targeting the mitochondrion. Residues 233–420 (HVALIDCGVK…LENVRAAKSA (188 aa)) enclose the Glutamine amidotransferase type-1 domain. Cys309 acts as the Nucleophile in catalysis. Residues His393 and Glu395 contribute to the active site.

This sequence belongs to the CarA family. As to quaternary structure, heterodimer composed of 2 chains; the small (or glutamine) chain promotes the hydrolysis of glutamine to ammonia, which is used by the large (or ammonia) chain to synthesize carbamoyl phosphate.

Its subcellular location is the mitochondrion matrix. It carries out the reaction hydrogencarbonate + L-glutamine + 2 ATP + H2O = carbamoyl phosphate + L-glutamate + 2 ADP + phosphate + 2 H(+). It catalyses the reaction L-glutamine + H2O = L-glutamate + NH4(+). Its pathway is amino-acid biosynthesis; L-arginine biosynthesis; carbamoyl phosphate from bicarbonate: step 1/1. In terms of biological role, small subunit of the arginine-specific carbamoyl phosphate synthase (CPSase). CPSase catalyzes the formation of carbamoyl phosphate from the ammonia moiety of glutamine, carbonate, and phosphate donated by ATP, the first step of the arginine biosynthetic pathway. The small subunit (glutamine amidotransferase) binds and cleaves glutamine to supply the large subunit with the substrate ammonia. This is Carbamoyl phosphate synthase arginine-specific small chain (cpa1) from Hypocrea virens (Gliocladium virens).